Here is a 313-residue protein sequence, read N- to C-terminus: tRNA dimethylallyltransferase (313 aa).

17-24 (GPTASGKT) serves as a coordination point for ATP. 19-24 (TASGKT) contacts substrate. Interaction with substrate tRNA regions lie at residues 42 to 45 (DSAL), 166 to 170 (QRLSR), 247 to 252 (RCVGYR), and 280 to 287 (KRQITWLR).

It belongs to the IPP transferase family. As to quaternary structure, monomer. It depends on Mg(2+) as a cofactor.

It carries out the reaction adenosine(37) in tRNA + dimethylallyl diphosphate = N(6)-dimethylallyladenosine(37) in tRNA + diphosphate. Catalyzes the transfer of a dimethylallyl group onto the adenine at position 37 in tRNAs that read codons beginning with uridine, leading to the formation of N6-(dimethylallyl)adenosine (i(6)A). This is tRNA dimethylallyltransferase from Proteus mirabilis (strain HI4320).